Here is a 202-residue protein sequence, read N- to C-terminus: Securin (202 aa).

Residue Ala2 is modified to N-acetylalanine. The segment at 35–94 (LDGRSQVSTPRFGKTFDAPPALPKATRKALGTVNRATEKSVKTKGPLKQKQPSFSAKKMT) is disordered. The D-box motif lies at 61–64 (RKAL). Short sequence motifs (TEK-box) lie at residues 71–73 (TEK) and 94–96 (TEK). The SH3-binding motif lies at 163–173 (PPSPVRMPSPP). Ser165 is subject to Phosphoserine; by CDK1.

This sequence belongs to the securin family. In terms of assembly, interacts with RPS10 and DNAJA1. Interacts with the caspase-like ESPL1, and prevents its protease activity probably by covering its active site. Interacts with TP53 and blocks its activity probably by blocking its binding to DNA. Interacts with the Ku 70 kDa subunit of ds-DNA kinase. Interacts with PTTG1IP. Post-translationally, phosphorylated at Ser-165 by CDK1 during mitosis. In terms of processing, phosphorylated in vitro by ds-DNA kinase. Ubiquitinated through 'Lys-11' linkage of ubiquitin moieties by the anaphase promoting complex (APC) at the onset of anaphase, conducting to its degradation. 'Lys-11'-linked ubiquitination is mediated by the E2 ligase UBE2C/UBCH10.

Its subcellular location is the cytoplasm. The protein resides in the nucleus. Regulatory protein, which plays a central role in chromosome stability, in the p53/TP53 pathway, and DNA repair. Probably acts by blocking the action of key proteins. During the mitosis, it blocks Separase/ESPL1 function, preventing the proteolysis of the cohesin complex and the subsequent segregation of the chromosomes. At the onset of anaphase, it is ubiquitinated, conducting to its destruction and to the liberation of ESPL1. Its function is however not limited to a blocking activity, since it is required to activate ESPL1. Negatively regulates the transcriptional activity and related apoptosis activity of TP53. The negative regulation of TP53 may explain the strong transforming capability of the protein when it is overexpressed. May also play a role in DNA repair via its interaction with Ku, possibly by connecting DNA damage-response pathways with sister chromatid separation. The chain is Securin (PTTG1) from Gorilla gorilla gorilla (Western lowland gorilla).